The sequence spans 188 residues: Peptidyl-tRNA hydrolase (188 aa).

A tRNA-binding site is contributed by Tyr14. Catalysis depends on His19, which acts as the Proton acceptor. TRNA is bound by residues Tyr64, Asn66, and Asn112.

This sequence belongs to the PTH family. In terms of assembly, monomer.

It is found in the cytoplasm. The enzyme catalyses an N-acyl-L-alpha-aminoacyl-tRNA + H2O = an N-acyl-L-amino acid + a tRNA + H(+). Functionally, hydrolyzes ribosome-free peptidyl-tRNAs (with 1 or more amino acids incorporated), which drop off the ribosome during protein synthesis, or as a result of ribosome stalling. Its function is as follows. Catalyzes the release of premature peptidyl moieties from peptidyl-tRNA molecules trapped in stalled 50S ribosomal subunits, and thus maintains levels of free tRNAs and 50S ribosomes. Releases Ala-tailed nascent peptides from stalled 50S ribosomal subunits. Non-templated Ala tailing occurs as part of the ribosome quality control (RQC) pathway. In the absence of Ala tails significantly less peptide release occurs. The Ala tail facilitates the interaction of Pth with the nascent peptide-tRNA ester bond as well as promoting nascent chain degradation; 3 Ala residues suffice to stimulate peptide release from stalled 50S ribosomal subunits. Complements a temperature-sensitive pth mutation in E.coli. This Bacillus subtilis (strain 168) protein is Peptidyl-tRNA hydrolase.